The following is a 235-amino-acid chain: Proteasome subunit alpha type-2-A (235 aa).

Residue Lys-64 forms a Glycyl lysine isopeptide (Lys-Gly) (interchain with G-Cter in ubiquitin) linkage.

This sequence belongs to the peptidase T1A family. Component of the 20S core complex of the 26S proteasome. The 26S proteasome is composed of a core protease (CP), known as the 20S proteasome, capped at one or both ends by the 19S regulatory particle (RP/PA700). The 20S proteasome core is composed of 28 subunits that are arranged in four stacked rings, resulting in a barrel-shaped structure. The two end rings are each formed by seven alpha subunits, and the two central rings are each formed by seven beta subunits. The catalytic chamber with the active sites is on the inside of the barrel.

Its subcellular location is the cytoplasm. It is found in the nucleus. Its function is as follows. The proteasome is a multicatalytic proteinase complex which is characterized by its ability to cleave peptides with Arg, Phe, Tyr, Leu, and Glu adjacent to the leaving group at neutral or slightly basic pH. The proteasome has an ATP-dependent proteolytic activity. The sequence is that of Proteasome subunit alpha type-2-A (PAB1) from Arabidopsis thaliana (Mouse-ear cress).